Here is a 314-residue protein sequence, read N- to C-terminus: Homoserine O-succinyltransferase (314 aa).

Cys-142 functions as the Acyl-thioester intermediate in the catalytic mechanism. Positions 163 and 192 each coordinate substrate. Catalysis depends on His-235, which acts as the Proton acceptor. Residue Glu-237 is part of the active site. Arg-249 is a substrate binding site.

This sequence belongs to the MetA family.

It is found in the cytoplasm. It carries out the reaction L-homoserine + succinyl-CoA = O-succinyl-L-homoserine + CoA. The protein operates within amino-acid biosynthesis; L-methionine biosynthesis via de novo pathway; O-succinyl-L-homoserine from L-homoserine: step 1/1. In terms of biological role, transfers a succinyl group from succinyl-CoA to L-homoserine, forming succinyl-L-homoserine. The protein is Homoserine O-succinyltransferase of Aeromonas salmonicida (strain A449).